A 353-amino-acid polypeptide reads, in one-letter code: DNA polymerase IV (353 aa).

One can recognise a UmuC domain in the interval 14–198 (IIHIDMDAFF…MDISKFHGVG (185 aa)). Residues aspartate 18 and aspartate 116 each coordinate Mg(2+). Glutamate 117 is a catalytic residue.

It belongs to the DNA polymerase type-Y family. As to quaternary structure, monomer. Requires Mg(2+) as cofactor.

The protein resides in the cytoplasm. The enzyme catalyses DNA(n) + a 2'-deoxyribonucleoside 5'-triphosphate = DNA(n+1) + diphosphate. Poorly processive, error-prone DNA polymerase involved in untargeted mutagenesis. Copies undamaged DNA at stalled replication forks, which arise in vivo from mismatched or misaligned primer ends. These misaligned primers can be extended by PolIV. Exhibits no 3'-5' exonuclease (proofreading) activity. May be involved in translesional synthesis, in conjunction with the beta clamp from PolIII. The chain is DNA polymerase IV from Streptococcus pneumoniae serotype 4 (strain ATCC BAA-334 / TIGR4).